A 284-amino-acid chain; its full sequence is Ribose-phosphate pyrophosphokinase (284 aa).

ATP-binding positions include 34-36 (DNE) and 92-93 (RQ). Mg(2+)-binding residues include His125 and Asp163. Lys186 is a catalytic residue. Residues Arg188, Asp212, and 216 to 220 (STGGT) each bind D-ribose 5-phosphate.

This sequence belongs to the ribose-phosphate pyrophosphokinase family. Class III (archaeal) subfamily. As to quaternary structure, homotetramer. Requires Mg(2+) as cofactor.

The protein resides in the cytoplasm. It catalyses the reaction D-ribose 5-phosphate + ATP = 5-phospho-alpha-D-ribose 1-diphosphate + AMP + H(+). It functions in the pathway metabolic intermediate biosynthesis; 5-phospho-alpha-D-ribose 1-diphosphate biosynthesis; 5-phospho-alpha-D-ribose 1-diphosphate from D-ribose 5-phosphate (route I): step 1/1. Its activity is regulated as follows. Activated by inorganic phosphate, with a maximal activity at 190 mM. Above this concentration inorganic phosphate progressively inhibits the kinase. Completely inhibited by ADP, and partially inhibited by alpha,beta-methylene ATP (mATP). Lack of allosteric regulation. Involved in the biosynthesis of the central metabolite phospho-alpha-D-ribosyl-1-pyrophosphate (PRPP) via the transfer of pyrophosphoryl group from ATP to 1-hydroxyl of ribose-5-phosphate (Rib-5-P). It can also use dATP as diphosphoryl donor. The sequence is that of Ribose-phosphate pyrophosphokinase from Methanocaldococcus jannaschii (strain ATCC 43067 / DSM 2661 / JAL-1 / JCM 10045 / NBRC 100440) (Methanococcus jannaschii).